A 260-amino-acid polypeptide reads, in one-letter code: Imidazole glycerol phosphate synthase subunit HisF (260 aa).

Catalysis depends on residues aspartate 11 and aspartate 130.

This sequence belongs to the HisA/HisF family. In terms of assembly, heterodimer of HisH and HisF.

It is found in the cytoplasm. It carries out the reaction 5-[(5-phospho-1-deoxy-D-ribulos-1-ylimino)methylamino]-1-(5-phospho-beta-D-ribosyl)imidazole-4-carboxamide + L-glutamine = D-erythro-1-(imidazol-4-yl)glycerol 3-phosphate + 5-amino-1-(5-phospho-beta-D-ribosyl)imidazole-4-carboxamide + L-glutamate + H(+). Its pathway is amino-acid biosynthesis; L-histidine biosynthesis; L-histidine from 5-phospho-alpha-D-ribose 1-diphosphate: step 5/9. In terms of biological role, IGPS catalyzes the conversion of PRFAR and glutamine to IGP, AICAR and glutamate. The HisF subunit catalyzes the cyclization activity that produces IGP and AICAR from PRFAR using the ammonia provided by the HisH subunit. This chain is Imidazole glycerol phosphate synthase subunit HisF, found in Psychrobacter arcticus (strain DSM 17307 / VKM B-2377 / 273-4).